A 378-amino-acid chain; its full sequence is Cytochrome b (378 aa).

A run of 4 helical transmembrane segments spans residues 34 to 54 (FGSLLGLCLVIQILSGLFLSM), 78 to 100 (WLLRSIHANGASFFFMCLYCHIG), 113 to 133 (TWNVGVVIFFLTMGTAFVGYV), and 179 to 199 (FFSFHFLFPFMIAGLSMVHLL). Residues His-84 and His-98 each contribute to the heme b site. The heme b site is built by His-183 and His-197. His-202 provides a ligand contact to a ubiquinone. The next 4 helical transmembrane spans lie at 225-245 (YSTKDIAGFLVFFFVFFIVVL), 289-306 (LGGVVSLVASIAILFCLP), 313-342 (KFRSLVFYPLNQILFWSFCSIFLLLTWIGM), and 350-369 (IFIGQILTVLYFSYFLLNPL).

It belongs to the cytochrome b family. As to quaternary structure, the main subunits of complex b-c1 are: cytochrome b, cytochrome c1 and the Rieske protein. The cofactor is heme b.

The protein localises to the mitochondrion inner membrane. In terms of biological role, component of the ubiquinol-cytochrome c reductase complex (complex III or cytochrome b-c1 complex) that is part of the mitochondrial respiratory chain. The b-c1 complex mediates electron transfer from ubiquinol to cytochrome c. Contributes to the generation of a proton gradient across the mitochondrial membrane that is then used for ATP synthesis. This Loxocorone allax (Goblet worm) protein is Cytochrome b (mt:Cyt-b).